The following is a 272-amino-acid chain: tRNA pseudouridine synthase B (272 aa).

Catalysis depends on D38, which acts as the Nucleophile.

The protein belongs to the pseudouridine synthase TruB family. Type 1 subfamily.

The catalysed reaction is uridine(55) in tRNA = pseudouridine(55) in tRNA. Responsible for synthesis of pseudouridine from uracil-55 in the psi GC loop of transfer RNAs. This is tRNA pseudouridine synthase B from Campylobacter jejuni subsp. jejuni serotype O:23/36 (strain 81-176).